Consider the following 240-residue polypeptide: Serine protease SplB (240 aa).

Positions 1-36 are cleaved as a signal peptide; it reads MNKNVVIKSLAALTILTSVTGIGTTLVEEVQQTAKA. Catalysis depends on charge relay system residues His-75, Asp-113, and Ser-193.

The protein belongs to the peptidase S1B family.

The protein localises to the secreted. Serine protease that cleaves specifically after the sequence Trp-Glu-Leu-Gln. The polypeptide is Serine protease SplB (splB) (Staphylococcus aureus (strain USA300)).